A 124-amino-acid polypeptide reads, in one-letter code: Flowering-promoting factor 1-like protein 1 (124 aa).

The disordered stretch occupies residues 19–42 (PYNQSAGDSSESSSSGGNQQQRMR). Over residues 22–39 (QSAGDSSESSSSGGNQQQ) the composition is skewed to low complexity.

It belongs to the FPF1 family. In terms of tissue distribution, expressed in roots, flowers, and at a low level, in leaves.

Modulates the competence to flowering of apical meristems. The polypeptide is Flowering-promoting factor 1-like protein 1 (FLP1) (Arabidopsis thaliana (Mouse-ear cress)).